Consider the following 123-residue polypeptide: uncharacterized protein (123 aa).

Helical transmembrane passes span 7-29, 44-66, and 79-101; these read VKHLIIAGFSAAILSFLISFDAV, FFIHSFLLIGLPLALFTDAVHRI, and LGLYATVVYVSWDSAVWLAAAMA.

The protein localises to the cell membrane. This is an uncharacterized protein from Bacillus subtilis (strain 168).